Consider the following 302-residue polypeptide: Succinate--CoA ligase [ADP-forming] subunit alpha (302 aa).

CoA-binding positions include 17–20 (TGST), Lys-43, and 96–98 (ITE). Tyr-159 serves as a coordination point for substrate. The Tele-phosphohistidine intermediate role is filled by His-247.

It belongs to the succinate/malate CoA ligase alpha subunit family. In terms of assembly, heterotetramer of two alpha and two beta subunits.

It catalyses the reaction succinate + ATP + CoA = succinyl-CoA + ADP + phosphate. The catalysed reaction is GTP + succinate + CoA = succinyl-CoA + GDP + phosphate. It participates in carbohydrate metabolism; tricarboxylic acid cycle; succinate from succinyl-CoA (ligase route): step 1/1. Succinyl-CoA synthetase functions in the citric acid cycle (TCA), coupling the hydrolysis of succinyl-CoA to the synthesis of either ATP or GTP and thus represents the only step of substrate-level phosphorylation in the TCA. The alpha subunit of the enzyme binds the substrates coenzyme A and phosphate, while succinate binding and nucleotide specificity is provided by the beta subunit. This is Succinate--CoA ligase [ADP-forming] subunit alpha from Staphylococcus epidermidis (strain ATCC 35984 / DSM 28319 / BCRC 17069 / CCUG 31568 / BM 3577 / RP62A).